A 384-amino-acid polypeptide reads, in one-letter code: 8-amino-7-oxononanoate synthase (384 aa).

Arginine 21 lines the substrate pocket. A pyridoxal 5'-phosphate-binding site is contributed by 108-109; that stretch reads GF. Histidine 133 serves as a coordination point for substrate. Serine 179, histidine 207, and threonine 233 together coordinate pyridoxal 5'-phosphate. Lysine 236 is modified (N6-(pyridoxal phosphate)lysine). Threonine 352 lines the substrate pocket.

The protein belongs to the class-II pyridoxal-phosphate-dependent aminotransferase family. BioF subfamily. In terms of assembly, homodimer. Pyridoxal 5'-phosphate serves as cofactor.

The catalysed reaction is 6-carboxyhexanoyl-[ACP] + L-alanine + H(+) = (8S)-8-amino-7-oxononanoate + holo-[ACP] + CO2. The protein operates within cofactor biosynthesis; biotin biosynthesis. Catalyzes the decarboxylative condensation of pimeloyl-[acyl-carrier protein] and L-alanine to produce 8-amino-7-oxononanoate (AON), [acyl-carrier protein], and carbon dioxide. The polypeptide is 8-amino-7-oxononanoate synthase (Escherichia coli O17:K52:H18 (strain UMN026 / ExPEC)).